The primary structure comprises 144 residues: MPFGEYQYSLDDKGRVVIPAPFRDFVEDGLVLTRGMEGCLYVFPLDRWKKIEEQLVNLPLTDAEARAFVRFFYSGAHKTRMDSASRVLIPPPLRLFAGLKEGGEVVIAGAPGRLEIWSQERWWKAIEEVLAKPPAPEALKGLVG.

2 SpoVT-AbrB domains span residues 5–47 (EYQY…PLDR) and 76–121 (AHKT…SQER).

This sequence belongs to the MraZ family. As to quaternary structure, forms oligomers.

It is found in the cytoplasm. Its subcellular location is the nucleoid. The polypeptide is Transcriptional regulator MraZ (Thermus thermophilus (strain ATCC BAA-163 / DSM 7039 / HB27)).